Consider the following 160-residue polypeptide: Protein Vago (160 aa).

The signal sequence occupies residues 1 to 23 (MESISSMIYLVAMMSLIIGGSQA).

Expressed in fat body.

It localises to the secreted. In terms of biological role, probably involved in the antiviral immune response. May have a role in controlling viral load in the adult fat body, after infection with viruses such as the Drosophila C virus. The polypeptide is Protein Vago (Drosophila melanogaster (Fruit fly)).